The chain runs to 282 residues: Large ribosomal subunit protein uL2 (282 aa).

Disordered stretches follow at residues 26-55 and 218-266; these read KKSP…RHRG and PHVR…HNKS. Over residues 34 to 43 the composition is skewed to polar residues; it reads LESQSHTAGR. Positions 254–266 are enriched in basic residues; that stretch reads TIGKKTRNKHNKS.

The protein belongs to the universal ribosomal protein uL2 family. In terms of assembly, part of the 50S ribosomal subunit. Forms a bridge to the 30S subunit in the 70S ribosome.

Functionally, one of the primary rRNA binding proteins. Required for association of the 30S and 50S subunits to form the 70S ribosome, for tRNA binding and peptide bond formation. It has been suggested to have peptidyltransferase activity; this is somewhat controversial. Makes several contacts with the 16S rRNA in the 70S ribosome. The polypeptide is Large ribosomal subunit protein uL2 (Pediococcus pentosaceus (strain ATCC 25745 / CCUG 21536 / LMG 10740 / 183-1w)).